The primary structure comprises 464 residues: MGKRLLDKLWERHVVATNENGLDLLYIDLHLVHEVTSPQAFEGLRLTNRTVRRPDLTFATMDHNIPTKDVWNITDRIAKQQLDTLRENCKQFQVPLADIGDEEQGIVHVIGPELGLTQPGKTIVCGDSHTATHGAFGALAFGIGTSEVEHVLATQTLWQRKPKAMGIELKGKLQKGVYAKDIILHLLSKYGVAVGTGYVMEFYGETIQAMEMEERMTLCNMAIEGGAKAGIIAPDEKTVAYVKGRKYAPKDYETFEKKWSELYTDADAMYDLHISIDVTDLAPYVTWGTNPSMGVRIDEKLPEKHDVNDERAFSYMGLSPGQSTYDIPVQHVFIGSCTNSRLSDLEIAASVVKGRKVKEGVRALVVPGSKRVRDAAMQKGLHHIFEEAGFEWREPGCSMCLGMNPDQVPEGEHCASTSNRNFEGRQGKGARTHLVSPAMAAAAALYGHFVDIRKESYDGAISYS.

3 residues coordinate [4Fe-4S] cluster: Cys337, Cys397, and Cys400.

The protein belongs to the aconitase/IPM isomerase family. LeuC type 1 subfamily. Heterodimer of LeuC and LeuD. The cofactor is [4Fe-4S] cluster.

The enzyme catalyses (2R,3S)-3-isopropylmalate = (2S)-2-isopropylmalate. It participates in amino-acid biosynthesis; L-leucine biosynthesis; L-leucine from 3-methyl-2-oxobutanoate: step 2/4. Functionally, catalyzes the isomerization between 2-isopropylmalate and 3-isopropylmalate, via the formation of 2-isopropylmaleate. This chain is 3-isopropylmalate dehydratase large subunit, found in Bacillus cereus (strain ATCC 10987 / NRS 248).